Here is a 549-residue protein sequence, read N- to C-terminus: Tigger transposable element-derived protein 7 (549 aa).

The HTH psq-type domain occupies 1–52 (MNKRGKYTTLNLEEKMKVLSRIEAGRSLKSVMDEFGISKSTFYDIKKNKKLI). 2 consecutive DNA-binding regions (H-T-H motif) follow at residues 28–48 (LKSV…IKKN) and 101–132 (VELQ…FRNR). An HTH CENPB-type domain is found at 68-139 (KRKRTTGAKY…RNRHAIGNRK (72 aa)). One can recognise a DDE-1 domain in the interval 169-399 (LCLAQLYSGD…VKQITIANAW (231 aa)). The tract at residues 527–549 (FLKPRPHNIKDSFSGPSTSGSNH) is disordered. The span at 540–549 (SGPSTSGSNH) shows a compositional bias: polar residues.

Belongs to the tigger transposable element derived protein family. In terms of tissue distribution, expressed in all tissues tested. Higher expression in testis and ovary.

The protein resides in the nucleus. This Homo sapiens (Human) protein is Tigger transposable element-derived protein 7 (TIGD7).